Here is a 108-residue protein sequence, read N- to C-terminus: Transcriptional activator HlyU (108 aa).

The HTH arsR-type domain maps to 13 to 107 (EMEKNSAKAV…LLHRLYCQAN (95 aa)). Residues 47–66 (VGELSSRLELSQSALSQHLA) constitute a DNA-binding region (H-T-H motif).

Functionally, up-regulates the expression of the hemolysin gene, hlyA, and may promote expression of other virulence determinants in vivo. It may have both positive and negative regulator activities. This Vibrio cholerae serotype O1 (strain ATCC 39315 / El Tor Inaba N16961) protein is Transcriptional activator HlyU (hlyU).